The primary structure comprises 460 residues: Glycogen synthase (460 aa).

Residue Lys-15 participates in ADP-alpha-D-glucose binding.

Belongs to the glycosyltransferase 1 family. Bacterial/plant glycogen synthase subfamily.

It catalyses the reaction [(1-&gt;4)-alpha-D-glucosyl](n) + ADP-alpha-D-glucose = [(1-&gt;4)-alpha-D-glucosyl](n+1) + ADP + H(+). It functions in the pathway glycan biosynthesis; glycogen biosynthesis. Functionally, synthesizes alpha-1,4-glucan chains using ADP-glucose. In Trichodesmium erythraeum (strain IMS101), this protein is Glycogen synthase.